A 524-amino-acid polypeptide reads, in one-letter code: Homeobox protein engrailed-like SMOX-2 (524 aa).

The disordered stretch occupies residues 194 to 218; that stretch reads SSSSSSSSSSSSSSSSSSCSTNSSS. Residues 423–482 constitute a DNA-binding region (homeobox); the sequence is LKRPRTSFTVPQLKRLSQEFEKNRYLDELRRKKLATELDLRESQVKIWFQNKRAKTKKAS.

The protein belongs to the engrailed homeobox family.

It localises to the nucleus. This chain is Homeobox protein engrailed-like SMOX-2 (SMOX-2), found in Schistosoma mansoni (Blood fluke).